A 384-amino-acid polypeptide reads, in one-letter code: 4-hydroxy-3-methylbut-2-en-1-yl diphosphate synthase (flavodoxin) 1 (384 aa).

Residues C281, C284, C316, and E323 each contribute to the [4Fe-4S] cluster site.

Belongs to the IspG family. It depends on [4Fe-4S] cluster as a cofactor.

It carries out the reaction (2E)-4-hydroxy-3-methylbut-2-enyl diphosphate + oxidized [flavodoxin] + H2O + 2 H(+) = 2-C-methyl-D-erythritol 2,4-cyclic diphosphate + reduced [flavodoxin]. The protein operates within isoprenoid biosynthesis; isopentenyl diphosphate biosynthesis via DXP pathway; isopentenyl diphosphate from 1-deoxy-D-xylulose 5-phosphate: step 5/6. Its function is as follows. Converts 2C-methyl-D-erythritol 2,4-cyclodiphosphate (ME-2,4cPP) into 1-hydroxy-2-methyl-2-(E)-butenyl 4-diphosphate. The protein is 4-hydroxy-3-methylbut-2-en-1-yl diphosphate synthase (flavodoxin) 1 of Streptomyces coelicolor (strain ATCC BAA-471 / A3(2) / M145).